Consider the following 342-residue polypeptide: MWNSLKAFALVFGGCCSNVITFETLMSNETGSINNLITFCQFLFVTCQGLPEFLDVHQPFPYFKPLKTPLHVYVITVVLFYISSTTNNNVFKYNISIPIHIVFRCFGTVITMFTCWLLNGRKYTKIQILSTLFLTIGAIIASLFKDADFRYQDLKLQAWKIGSDQSVDLTFIFGICILVLSSFTSSLLSAYNERTYQKYGKHWKENIFYSHFLSLPLFLFSRKQLIHEYRVMRKSERILCSNFGGKILVPREETLLLFNVLTQYFCVKGVNILASKTNALTLSITLLVRKFISLLLSVRLFDNNLSYTGYIGVYLVFFGAFIYSLGSIHPRQNDKGAIKKSK.

Residues 1–6 lie on the Cytoplasmic side of the membrane; sequence MWNSLK. The helical transmembrane segment at 7–27 threads the bilayer; that stretch reads AFALVFGGCCSNVITFETLMS. Topologically, residues 28 to 35 are lumenal; sequence NETGSINN. A helical membrane pass occupies residues 36–56; it reads LITFCQFLFVTCQGLPEFLDV. At 57–61 the chain is on the cytoplasmic side; that stretch reads HQPFP. Residues 62 to 82 form a helical membrane-spanning segment; it reads YFKPLKTPLHVYVITVVLFYI. Residues 83–96 lie on the Lumenal side of the membrane; it reads SSTTNNNVFKYNIS. Residues 97–117 traverse the membrane as a helical segment; the sequence is IPIHIVFRCFGTVITMFTCWL. The Cytoplasmic segment spans residues 118–123; sequence LNGRKY. A helical membrane pass occupies residues 124–144; it reads TKIQILSTLFLTIGAIIASLF. Residues 145 to 168 are Lumenal-facing; that stretch reads KDADFRYQDLKLQAWKIGSDQSVD. Residues 169–189 form a helical membrane-spanning segment; sequence LTFIFGICILVLSSFTSSLLS. Topologically, residues 190-253 are cytoplasmic; the sequence is AYNERTYQKY…GGKILVPREE (64 aa). Residues 254–274 traverse the membrane as a helical segment; that stretch reads TLLLFNVLTQYFCVKGVNILA. The Lumenal portion of the chain corresponds to 275–307; that stretch reads SKTNALTLSITLLVRKFISLLLSVRLFDNNLSY. The helical transmembrane segment at 308–328 threads the bilayer; that stretch reads TGYIGVYLVFFGAFIYSLGSI. Over 329 to 342 the chain is Cytoplasmic; the sequence is HPRQNDKGAIKKSK.

This sequence belongs to the nucleotide-sugar transporter family. SLC35B subfamily.

The protein resides in the endoplasmic reticulum. It is found in the endoplasmic reticulum membrane. Functionally, sugar transporter that specifically mediates the transport of UDP-N-acetylglucosamine (UDP-GlcNAc) and is required for cell wall chitin synthesis. The polypeptide is UDP-N-acetylglucosamine transporter YEA4 (YEA4) (Saccharomyces cerevisiae (strain ATCC 204508 / S288c) (Baker's yeast)).